We begin with the raw amino-acid sequence, 229 residues long: Cytidylate kinase (229 aa).

15-23 (GPAASGKST) lines the ATP pocket.

This sequence belongs to the cytidylate kinase family. Type 1 subfamily.

It localises to the cytoplasm. It catalyses the reaction CMP + ATP = CDP + ADP. It carries out the reaction dCMP + ATP = dCDP + ADP. The protein is Cytidylate kinase of Herpetosiphon aurantiacus (strain ATCC 23779 / DSM 785 / 114-95).